Consider the following 399-residue polypeptide: UDP-N-acetylglucosamine--N-acetylmuramyl-(pentapeptide) pyrophosphoryl-undecaprenol N-acetylglucosamine transferase (399 aa).

The interval 1–31 is disordered; it reads MTSRFGHSQHPRRGRSARARAGRREGVQSNF. The segment covering 7-21 has biased composition (basic residues); the sequence is HSQHPRRGRSARARA. Residues 58 to 60, Asn-170, Arg-206, Ser-234, Ile-288, and Gln-333 each bind UDP-N-acetyl-alpha-D-glucosamine; that span reads TGG.

The protein belongs to the glycosyltransferase 28 family. MurG subfamily.

The protein resides in the cell inner membrane. It carries out the reaction di-trans,octa-cis-undecaprenyl diphospho-N-acetyl-alpha-D-muramoyl-L-alanyl-D-glutamyl-meso-2,6-diaminopimeloyl-D-alanyl-D-alanine + UDP-N-acetyl-alpha-D-glucosamine = di-trans,octa-cis-undecaprenyl diphospho-[N-acetyl-alpha-D-glucosaminyl-(1-&gt;4)]-N-acetyl-alpha-D-muramoyl-L-alanyl-D-glutamyl-meso-2,6-diaminopimeloyl-D-alanyl-D-alanine + UDP + H(+). It participates in cell wall biogenesis; peptidoglycan biosynthesis. Its function is as follows. Cell wall formation. Catalyzes the transfer of a GlcNAc subunit on undecaprenyl-pyrophosphoryl-MurNAc-pentapeptide (lipid intermediate I) to form undecaprenyl-pyrophosphoryl-MurNAc-(pentapeptide)GlcNAc (lipid intermediate II). The sequence is that of UDP-N-acetylglucosamine--N-acetylmuramyl-(pentapeptide) pyrophosphoryl-undecaprenol N-acetylglucosamine transferase from Acidovorax sp. (strain JS42).